Here is a 399-residue protein sequence, read N- to C-terminus: CCA-adding enzyme (399 aa).

Gly-32 and Arg-35 together coordinate ATP. Gly-32 and Arg-35 together coordinate CTP. Positions 45 and 47 each coordinate Mg(2+). Arg-116, Asp-159, Arg-162, Arg-165, and Arg-168 together coordinate ATP. CTP is bound by residues Arg-116, Asp-159, Arg-162, Arg-165, and Arg-168.

This sequence belongs to the tRNA nucleotidyltransferase/poly(A) polymerase family. Bacterial CCA-adding enzyme type 3 subfamily. Homodimer. It depends on Mg(2+) as a cofactor.

The catalysed reaction is a tRNA precursor + 2 CTP + ATP = a tRNA with a 3' CCA end + 3 diphosphate. It carries out the reaction a tRNA with a 3' CCA end + 2 CTP + ATP = a tRNA with a 3' CCACCA end + 3 diphosphate. In terms of biological role, catalyzes the addition and repair of the essential 3'-terminal CCA sequence in tRNAs without using a nucleic acid template. Adds these three nucleotides in the order of C, C, and A to the tRNA nucleotide-73, using CTP and ATP as substrates and producing inorganic pyrophosphate. tRNA 3'-terminal CCA addition is required both for tRNA processing and repair. Also involved in tRNA surveillance by mediating tandem CCA addition to generate a CCACCA at the 3' terminus of unstable tRNAs. While stable tRNAs receive only 3'-terminal CCA, unstable tRNAs are marked with CCACCA and rapidly degraded. This is CCA-adding enzyme from Streptococcus gordonii (strain Challis / ATCC 35105 / BCRC 15272 / CH1 / DL1 / V288).